The chain runs to 231 residues: Ribosomal RNA small subunit methyltransferase G (231 aa).

Residues Gly-75, Phe-80, 126 to 127, and Arg-142 each bind S-adenosyl-L-methionine; that span reads AE.

It belongs to the methyltransferase superfamily. RNA methyltransferase RsmG family.

It localises to the cytoplasm. Functionally, specifically methylates the N7 position of a guanine in 16S rRNA. This chain is Ribosomal RNA small subunit methyltransferase G, found in Mycoplasma capricolum subsp. capricolum (strain California kid / ATCC 27343 / NCTC 10154).